The following is a 462-amino-acid chain: A-type ATP synthase subunit B (462 aa).

The protein belongs to the ATPase alpha/beta chains family. As to quaternary structure, has multiple subunits with at least A(3), B(3), C, D, E, F, H, I and proteolipid K(x).

The protein localises to the cell membrane. Component of the A-type ATP synthase that produces ATP from ADP in the presence of a proton gradient across the membrane. The B chain is a regulatory subunit. This is A-type ATP synthase subunit B from Cenarchaeum symbiosum (strain A).